The chain runs to 463 residues: Chromosomal replication initiator protein DnaA (463 aa).

A domain I, interacts with DnaA modulators region spans residues methionine 1–threonine 90. The domain II stretch occupies residues valine 91–serine 126. The tract at residues asparagine 127–alanine 343 is domain III, AAA+ region. The ATP site is built by glycine 171, glycine 173, lysine 174, and threonine 175. Positions asparagine 344 to serine 463 are domain IV, binds dsDNA.

It belongs to the DnaA family. As to quaternary structure, oligomerizes as a right-handed, spiral filament on DNA at oriC.

The protein localises to the cytoplasm. Plays an essential role in the initiation and regulation of chromosomal replication. ATP-DnaA binds to the origin of replication (oriC) to initiate formation of the DNA replication initiation complex once per cell cycle. Binds the DnaA box (a 9 base pair repeat at the origin) and separates the double-stranded (ds)DNA. Forms a right-handed helical filament on oriC DNA; dsDNA binds to the exterior of the filament while single-stranded (ss)DNA is stabiized in the filament's interior. The ATP-DnaA-oriC complex binds and stabilizes one strand of the AT-rich DNA unwinding element (DUE), permitting loading of DNA polymerase. After initiation quickly degrades to an ADP-DnaA complex that is not apt for DNA replication. Binds acidic phospholipids. In Serratia proteamaculans (strain 568), this protein is Chromosomal replication initiator protein DnaA.